The chain runs to 386 residues: CUE domain-containing protein 1 (386 aa).

Residues 1–10 (MTSLFRRSSS) show a composition bias toward low complexity. Positions 1–40 (MTSLFRRSSSGSGGGGTAGARGGGGGTAAPQELNNSRPAR) are disordered. The segment covering 11–27 (GSGGGGTAGARGGGGGT) has biased composition (gly residues). One can recognise a CUE domain in the interval 46–89 (EFNQAMDDFKTMFPNMDYDIIECVLRANSGAVDATIDQLLQMNL). Disordered regions lie at residues 147–172 (LAPP…RYRN), 195–225 (SIQG…DQES), and 367–386 (DFRG…REGQ). Residues 199 to 209 (NAGGPKPGSGE) are compositionally biased toward gly residues.

The protein is CUE domain-containing protein 1 (CUEDC1) of Homo sapiens (Human).